A 503-amino-acid polypeptide reads, in one-letter code: Arabinose import ATP-binding protein AraG (503 aa).

ABC transporter domains lie at 5–240 and 253–497; these read LRFD…MVGR and LGDV…LPQG. 37–44 is a binding site for ATP; the sequence is GENGAGKS.

The protein belongs to the ABC transporter superfamily. Arabinose importer (TC 3.A.1.2.2) family. The complex is composed of two ATP-binding proteins (AraG), two transmembrane proteins (AraH) and a solute-binding protein (AraF).

It is found in the cell inner membrane. The catalysed reaction is L-arabinose(out) + ATP + H2O = L-arabinose(in) + ADP + phosphate + H(+). Part of the ABC transporter complex AraFGH involved in arabinose import. Responsible for energy coupling to the transport system. This Burkholderia pseudomallei (strain 1710b) protein is Arabinose import ATP-binding protein AraG.